Reading from the N-terminus, the 412-residue chain is Sterol-4-alpha-carboxylate 3-dehydrogenase erg26, decarboxylating (412 aa).

Residues 17-23, 89-90, and 111-113 each bind NADP(+); these read GGCGFLG, DI, and TAT. Residues S158 and Y188 each coordinate substrate. NADP(+) contacts are provided by residues Y188, K192, and 217 to 220; that span reads PAGI. The active-site Proton donor is K192.

It belongs to the 3-beta-HSD family. As to quaternary structure, heterotetramer of erg25, erg26, erg27 and erg28. Erg28 acts as a scaffold to tether erg27 and other 4,4-demethylation-related enzymes, forming a demethylation enzyme complex, in the endoplasmic reticulum.

It is found in the endoplasmic reticulum membrane. The protein operates within steroid metabolism; ergosterol biosynthesis. Its function is as follows. Sterol-C4-methyl oxidase; part of the third module of ergosterol biosynthesis pathway that includes the late steps of the pathway. Erg26 is a catalytic component of the C-4 demethylation complex that catalyzes the conversion of 4,4-dimethylfecosterol into fecosterol via 4-methylfecosterol. The third module or late pathway involves the ergosterol synthesis itself through consecutive reactions that mainly occur in the endoplasmic reticulum (ER) membrane. Firstly, the squalene synthase erg9 catalyzes the condensation of 2 farnesyl pyrophosphate moieties to form squalene, which is the precursor of all steroids. Squalene synthase is crucial for balancing the incorporation of farnesyl diphosphate (FPP) into sterol and nonsterol isoprene synthesis. Secondly, squalene is converted into lanosterol by the consecutive action of the squalene epoxidase erg1 and the lanosterol synthase erg7. Then, the delta(24)-sterol C-methyltransferase erg6 methylates lanosterol at C-24 to produce eburicol. Eburicol is the substrate of the sterol 14-alpha demethylase encoded by cyp51A and cyp51B, to yield 4,4,24-trimethyl ergosta-8,14,24(28)-trienol. The C-14 reductase erg24 then reduces the C14=C15 double bond which leads to 4,4-dimethylfecosterol. A sequence of further demethylations at C-4, involving the C-4 demethylation complex containing the C-4 methylsterol oxidases erg25A or erg25B, the sterol-4-alpha-carboxylate 3-dehydrogenase erg26 and the 3-keto-steroid reductase erg27, leads to the production of fecosterol via 4-methylfecosterol. The C-8 sterol isomerase erg2 then catalyzes the reaction which results in unsaturation at C-7 in the B ring of sterols and thus converts fecosterol to episterol. The sterol-C5-desaturase erg3B then catalyzes the introduction of a C-5 double bond in the B ring to produce 5-dehydroepisterol. The 2 other sterol-C5-desaturases, erg3A and erg3C, seem to be less important in ergosterol biosynthesis. The C-22 sterol desaturase erg5 further converts 5-dehydroepisterol into ergosta-5,7,22,24(28)-tetraen-3beta-ol by forming the C-22(23) double bond in the sterol side chain. Finally, ergosta-5,7,22,24(28)-tetraen-3beta-ol is substrate of the C-24(28) sterol reductases erg4A and erg4B to produce ergosterol. Possible alternative sterol biosynthetic pathways might exist from fecosterol to ergosterol, depending on the activities of the erg3 isoforms. This chain is Sterol-4-alpha-carboxylate 3-dehydrogenase erg26, decarboxylating, found in Aspergillus fumigatus (strain ATCC MYA-4609 / CBS 101355 / FGSC A1100 / Af293) (Neosartorya fumigata).